The sequence spans 694 residues: DNA primase (694 aa).

The CHC2-type zinc finger occupies 41–65 (CPFHDDKSPSFTVSPAKQFYYCFSC). Residues 265-348 (DQAVVVEGYF…QGQVQLRVLN (84 aa)) form the Toprim domain. Residues Glu271, Asp317, and Asp319 each coordinate Mg(2+).

This sequence belongs to the DnaG primase family. In terms of assembly, monomer. Interacts with DnaB. The cofactor is Zn(2+). It depends on Mg(2+) as a cofactor.

It carries out the reaction ssDNA + n NTP = ssDNA/pppN(pN)n-1 hybrid + (n-1) diphosphate.. Functionally, RNA polymerase that catalyzes the synthesis of short RNA molecules used as primers for DNA polymerase during DNA replication. The polypeptide is DNA primase (Synechococcus elongatus (strain ATCC 33912 / PCC 7942 / FACHB-805) (Anacystis nidulans R2)).